The chain runs to 141 residues: Nucleoside triphosphatase NudI (141 aa).

A Nudix hydrolase domain is found at 1-141; that stretch reads MRQRTIVCPL…RHTLALKGLL (141 aa). Positions 38–59 match the Nudix box motif; sequence GGVEPGERIEEALRREIREELG.

It belongs to the Nudix hydrolase family. NudI subfamily. In terms of assembly, monomer. Mg(2+) is required as a cofactor.

It carries out the reaction a ribonucleoside 5'-triphosphate + H2O = a ribonucleoside 5'-phosphate + diphosphate + H(+). The catalysed reaction is a 2'-deoxyribonucleoside 5'-triphosphate + H2O = a 2'-deoxyribonucleoside 5'-phosphate + diphosphate + H(+). It catalyses the reaction dUTP + H2O = dUMP + diphosphate + H(+). The enzyme catalyses dTTP + H2O = dTMP + diphosphate + H(+). It carries out the reaction dCTP + H2O = dCMP + diphosphate + H(+). Catalyzes the hydrolysis of nucleoside triphosphates, with a preference for pyrimidine deoxynucleoside triphosphates (dUTP, dTTP and dCTP). In Salmonella newport (strain SL254), this protein is Nucleoside triphosphatase NudI.